We begin with the raw amino-acid sequence, 331 residues long: Transmembrane protein 59-like (331 aa).

The signal sequence occupies residues 1-21 (MAAVALPLLLLLASPATPTPA). Positions 15–62 (PATPTPARDPFSPQLGDTQRCQQRCRQRHPGLPPAQPEPEGPSESPNN) are disordered. A compositionally biased stretch (pro residues) spans 45 to 54 (GLPPAQPEPE). An N-linked (GlcNAc...) asparagine glycan is attached at Asn90. A helical membrane pass occupies residues 258–278 (VLFCCLFLSVLIILWLSCCTL). The Microbody targeting signal motif lies at 329–331 (TTL).

It belongs to the TMEM59 family.

The protein localises to the golgi apparatus membrane. Functionally, modulates the O-glycosylation and complex N-glycosylation steps occurring during the Golgi maturation of APP. Inhibits APP transport to the cell surface and further shedding. The chain is Transmembrane protein 59-like (Tmem59l) from Rattus norvegicus (Rat).